A 294-amino-acid chain; its full sequence is Elongation factor Ts (294 aa).

Positions 78 to 81 are involved in Mg(2+) ion dislocation from EF-Tu; that stretch reads TDFV.

This sequence belongs to the EF-Ts family.

The protein resides in the cytoplasm. Associates with the EF-Tu.GDP complex and induces the exchange of GDP to GTP. It remains bound to the aminoacyl-tRNA.EF-Tu.GTP complex up to the GTP hydrolysis stage on the ribosome. The chain is Elongation factor Ts from Mycoplasma mobile (strain ATCC 43663 / 163K / NCTC 11711) (Mesomycoplasma mobile).